We begin with the raw amino-acid sequence, 231 residues long: Phosphatidylserine decarboxylase proenzyme (231 aa).

Ser188 functions as the Schiff-base intermediate with substrate; via pyruvic acid in the catalytic mechanism. Ser188 carries the post-translational modification Pyruvic acid (Ser); by autocatalysis.

Belongs to the phosphatidylserine decarboxylase family. PSD-A subfamily. In terms of assembly, heterodimer of a large membrane-associated beta subunit and a small pyruvoyl-containing alpha subunit. Requires pyruvate as cofactor. Post-translationally, is synthesized initially as an inactive proenzyme. Formation of the active enzyme involves a self-maturation process in which the active site pyruvoyl group is generated from an internal serine residue via an autocatalytic post-translational modification. Two non-identical subunits are generated from the proenzyme in this reaction, and the pyruvate is formed at the N-terminus of the alpha chain, which is derived from the carboxyl end of the proenzyme. The post-translation cleavage follows an unusual pathway, termed non-hydrolytic serinolysis, in which the side chain hydroxyl group of the serine supplies its oxygen atom to form the C-terminus of the beta chain, while the remainder of the serine residue undergoes an oxidative deamination to produce ammonia and the pyruvoyl prosthetic group on the alpha chain.

It is found in the cell membrane. It carries out the reaction a 1,2-diacyl-sn-glycero-3-phospho-L-serine + H(+) = a 1,2-diacyl-sn-glycero-3-phosphoethanolamine + CO2. The protein operates within phospholipid metabolism; phosphatidylethanolamine biosynthesis; phosphatidylethanolamine from CDP-diacylglycerol: step 2/2. Functionally, catalyzes the formation of phosphatidylethanolamine (PtdEtn) from phosphatidylserine (PtdSer). The sequence is that of Phosphatidylserine decarboxylase proenzyme from Rickettsia prowazekii (strain Madrid E).